Here is a 256-residue protein sequence, read N- to C-terminus: Inner membrane transport permease YadH (256 aa).

At 1-22 (MMHLYWVALKSIWAKEIHRFMR) the chain is on the periplasmic side. Residues 22–251 (RIWVQTLVPP…LICWSLIQRG (230 aa)) enclose the ABC transmembrane type-2 domain. A helical membrane pass occupies residues 23-43 (IWVQTLVPPVITMTLYFIIFG). The Cytoplasmic portion of the chain corresponds to 44–52 (NLIGSRIGD). The helical transmembrane segment at 53 to 73 (MHGFSYMQFIVPGLIMMSVIT) threads the bilayer. The Periplasmic portion of the chain corresponds to 74–94 (NAYANVASSFFGAKFQRNIEE). A helical membrane pass occupies residues 95–115 (LLVAPVPTHVIIAGYVGGGVA). Residue arginine 116 is a topological domain, cytoplasmic. A helical membrane pass occupies residues 117–137 (GLFVGILVTAISLFFVPFQVH). Position 138 (serine 138) is a topological domain, periplasmic. Residues 139-159 (WVFVALTLVLTAVLFSLAGLL) form a helical membrane-spanning segment. At 160 to 169 (NGVFAKTFDD) the chain is on the cytoplasmic side. A helical transmembrane segment spans residues 170–190 (ISLVPTFVLTPLTYLGGVFYS). Over 191–223 (LTLLPPFWQGLSHLNPIVYMISGFRYGFLGIND) the chain is Periplasmic. The helical transmembrane segment at 224–244 (VPLVTTFGVLVVFIVAFYLIC) threads the bilayer. Topologically, residues 245-256 (WSLIQRGRGLRS) are cytoplasmic.

This sequence belongs to the ABC-2 integral membrane protein family.

The protein resides in the cell inner membrane. The chain is Inner membrane transport permease YadH (yadH) from Escherichia coli O157:H7.